We begin with the raw amino-acid sequence, 385 residues long: Sesquiterpene alcohol synthase (385 aa).

Mg(2+) contacts are provided by Asp-123 and Asp-127. The short motif at 123-127 is the DDXXD motif element; that stretch reads DDISD.

Belongs to the terpene synthase family. Mg(2+) is required as a cofactor. Specifically expressed in tissues lining the cuticle of the abdominal sternites of mature males.

The catalysed reaction is (2E,6E)-farnesyl diphosphate + H2O = (1S,6S,7R)-sesquipiperitol + diphosphate. It participates in pheromone biosynthesis. Sesquiterpene alcohol synthase that catalyzes the formation of (1S,6S,7R)-sesquipiperitol, a terpene intermediate in murgantiol biosynthesis, a male-released aggregation pheromone. The sequence is that of Sesquiterpene alcohol synthase from Murgantia histrionica (Harlequin bug).